The following is a 477-amino-acid chain: Secreted RxLR effector protein 102 (477 aa).

Residues 1–20 (MRGGYYVLTALFVVASSEIA) form the signal peptide. Residues 48–65 (RFLRESRGVHGNVANEER) carry the RxLR-dEER motif. Disordered stretches follow at residues 326–345 (SKGQIPYPSEPLNAASTSKG), 351–370 (IKRSKRTSDGNTDIASLPSI), 376–401 (SSKSVMPLLTESTTSGDHSVPAKRSR), and 433–455 (PRSAVDPYTQSKKHSTKALAPSS).

This sequence belongs to the RxLR effector family.

It localises to the secreted. Its subcellular location is the host nucleus. Functionally, secreted effector that acts as an elicitor that induces cell death in host plant cells. This is Secreted RxLR effector protein 102 from Plasmopara viticola (Downy mildew of grapevine).